Here is a 970-residue protein sequence, read N- to C-terminus: Glycine dehydrogenase (decarboxylating) (970 aa).

Lys-723 carries the post-translational modification N6-(pyridoxal phosphate)lysine.

The protein belongs to the GcvP family. In terms of assembly, the glycine cleavage system is composed of four proteins: P, T, L and H. Pyridoxal 5'-phosphate serves as cofactor.

It catalyses the reaction N(6)-[(R)-lipoyl]-L-lysyl-[glycine-cleavage complex H protein] + glycine + H(+) = N(6)-[(R)-S(8)-aminomethyldihydrolipoyl]-L-lysyl-[glycine-cleavage complex H protein] + CO2. Its function is as follows. The glycine cleavage system catalyzes the degradation of glycine. The P protein binds the alpha-amino group of glycine through its pyridoxal phosphate cofactor; CO(2) is released and the remaining methylamine moiety is then transferred to the lipoamide cofactor of the H protein. In Burkholderia pseudomallei (strain 1106a), this protein is Glycine dehydrogenase (decarboxylating).